Here is a 377-residue protein sequence, read N- to C-terminus: Probable riboflavin import permease protein RfuC (377 aa).

10 helical membrane passes run 4-24, 49-69, 72-92, 98-118, 135-155, 182-202, 223-245, 249-268, 274-294, and 303-323; these read VINSCIAVLLGVAVMSAVIVL, ALFHKAGLFVCMALGASCALK, MINLGGDGQIYAAGFVTALLL, VGFLLQWSVALLCALSVAGIL, ITSFLLSTACVPLIDALIITV, FGVPAVLTYASLVALAVGCFF, FVGFPVWATYVWGMVLSGALFGL, FSVVGLFGTCYVGFSVGMGY, ALIAHAHITVLVPLAFFFAWM, and LGAHLTVNVVLFLQAAIFLLI.

The protein belongs to the binding-protein-dependent transport system permease family. The complex is probably composed of two ATP-binding proteins (RfuB), two transmembrane proteins (RfuC and RfuD) and a solute-binding protein (RfuA).

The protein resides in the cell inner membrane. In terms of biological role, probably part of the ABC transporter complex RfuABCD involved in riboflavin import. Probably responsible for the translocation of the substrate across the membrane. The polypeptide is Probable riboflavin import permease protein RfuC (Treponema pallidum (strain Nichols)).